The chain runs to 49 residues: Large ribosomal subunit protein bL33B (49 aa).

Belongs to the bacterial ribosomal protein bL33 family.

In Limosilactobacillus reuteri subsp. reuteri (strain JCM 1112) (Lactobacillus reuteri), this protein is Large ribosomal subunit protein bL33B.